A 354-amino-acid chain; its full sequence is Peptide chain release factor 1 (354 aa).

Q230 bears the N5-methylglutamine mark.

The protein belongs to the prokaryotic/mitochondrial release factor family. Post-translationally, methylated by PrmC. Methylation increases the termination efficiency of RF1.

It is found in the cytoplasm. Functionally, peptide chain release factor 1 directs the termination of translation in response to the peptide chain termination codons UAG and UAA. In Rhodospirillum rubrum (strain ATCC 11170 / ATH 1.1.1 / DSM 467 / LMG 4362 / NCIMB 8255 / S1), this protein is Peptide chain release factor 1.